The sequence spans 688 residues: PTS system glucoside-specific EIICBA component (688 aa).

The 425-residue stretch at K3–D427 folds into the PTS EIIC type-1 domain. The next 10 membrane-spanning stretches (helical) occupy residues I12–F32, L81–M101, L137–L157, F182–W202, L223–I243, A284–I304, V315–P335, F340–L360, L364–G384, and L395–I415. The PTS EIIB type-1 domain occupies A438–K519. C460 serves as the catalytic Phosphocysteine intermediate; for EIIB activity. Residues D560–N664 enclose the PTS EIIA type-1 domain. H612 serves as the catalytic Tele-phosphohistidine intermediate; for EIIA activity.

The protein localises to the cell membrane. Functionally, the phosphoenolpyruvate-dependent sugar phosphotransferase system (sugar PTS), a major carbohydrate active -transport system, catalyzes the phosphorylation of incoming sugar substrates concomitantly with their translocation across the cell membrane. This system is involved in alpha- and beta-glucoside transport. This chain is PTS system glucoside-specific EIICBA component (glcB), found in Staphylococcus aureus (strain bovine RF122 / ET3-1).